Reading from the N-terminus, the 34-residue chain is Photosystem II reaction center protein T (34 aa).

The helical transmembrane segment at 3–23 threads the bilayer; the sequence is ALVYTFLLVSTLGIIFFAIFF.

This sequence belongs to the PsbT family. In terms of assembly, PSII is composed of 1 copy each of membrane proteins PsbA, PsbB, PsbC, PsbD, PsbE, PsbF, PsbH, PsbI, PsbJ, PsbK, PsbL, PsbM, PsbT, PsbY, PsbZ, Psb30/Ycf12, at least 3 peripheral proteins of the oxygen-evolving complex and a large number of cofactors. It forms dimeric complexes.

Its subcellular location is the plastid. The protein localises to the chloroplast thylakoid membrane. In terms of biological role, found at the monomer-monomer interface of the photosystem II (PS II) dimer, plays a role in assembly and dimerization of PSII. PSII is a light-driven water plastoquinone oxidoreductase, using light energy to abstract electrons from H(2)O, generating a proton gradient subsequently used for ATP formation. In Atropa belladonna (Belladonna), this protein is Photosystem II reaction center protein T.